The chain runs to 486 residues: Cytochrome P450 monooxygenase aclC (486 aa).

Cys427 serves as a coordination point for heme.

This sequence belongs to the cytochrome P450 family. Heme is required as a cofactor.

It functions in the pathway mycotoxin biosynthesis. Cytochrome P450 monooxygenase; part of the gene cluster that mediates the biosynthesis of aspirochlorine (or antibiotic A30641), an unusual halogenated spiro compound with distinctive antifungal properties due to selective inhibition of protein biosynthesis, and which is also active against bacteria, viruses, and murine tumor cells. The non-ribosomal peptide synthetase (NRPS) aclP is responsible the formation of the diketopiperazine (DKP) core from the condensation of 2 phenylalanine residues. One Phe residue is tailored into chlorotyrosine by hydroxylation and chlorination, whereas the second Phe undergoes an unprecedented C-C bond cleavage to be converted into glycine. After formation of the DKP, sulfur is incorporated into the DKP by conjugation with glutathione by aclG, followed by its stepwise degradation to the thiol by aclI, aclJ and aclK, and the dithiol oxidation by aclT. In addition, oxygenases (aclB, aclC, aclL and aclO) and O-methyltransferases (aclM and aclU) act as tailoring enzymes to produce the intermediate dechloroaspirochlorine. Ultimately, chlorination of dechloroaspirochlorine by the halogenase aclH is the last step in the aspirochlorine pathway. The polypeptide is Cytochrome P450 monooxygenase aclC (Aspergillus oryzae (strain ATCC 42149 / RIB 40) (Yellow koji mold)).